A 689-amino-acid chain; its full sequence is Glycine--tRNA ligase beta subunit (689 aa).

It belongs to the class-II aminoacyl-tRNA synthetase family. As to quaternary structure, tetramer of two alpha and two beta subunits.

The protein localises to the cytoplasm. The catalysed reaction is tRNA(Gly) + glycine + ATP = glycyl-tRNA(Gly) + AMP + diphosphate. This Coxiella burnetii (strain Dugway 5J108-111) protein is Glycine--tRNA ligase beta subunit.